Consider the following 120-residue polypeptide: UPF0342 protein Csac_0863 (120 aa).

Belongs to the UPF0342 family.

The protein is UPF0342 protein Csac_0863 of Caldicellulosiruptor saccharolyticus (strain ATCC 43494 / DSM 8903 / Tp8T 6331).